Reading from the N-terminus, the 232-residue chain is NKG2-D type II integral membrane protein (232 aa).

The Cytoplasmic portion of the chain corresponds to 1–66 (MALIRDRKSH…IEKLKISPMF (66 aa)). Residues 67–89 (VVRVLAIALAIRFTLNTLMWLAI) form a helical; Signal-anchor for type II membrane protein membrane-spanning segment. The Extracellular segment spans residues 90–232 (FKETFQPVLC…NTYICMKRAV (143 aa)). 2 disulfide bridges follow: Cys-112–Cys-121 and Cys-115–Cys-126. The C-type lectin domain maps to 122–228 (HRNNCYQFFN…CANLNTYICM (107 aa)). 3 N-linked (GlcNAc...) asparagine glycosylation sites follow: Asn-137, Asn-147, and Asn-179. Intrachain disulfides connect Cys-143–Cys-227 and Cys-205–Cys-219.

Homodimer; disulfide-linked. Heterohexamer composed of two subunits of KLRK1 and four subunits of HCST/DAP10. Isoform 1 (via transmembrane domain) interacts with HCST/DAP10; the interaction is required for KLRK1 cell surface expression on activated CD8(+) T-cells, but is dispensable on activated TYROBP-expressing NK cells. Isoform 2 (via transmembrane domain) interacts with HCST/DAP10 (via transmembrane domain); the interaction is required for KLRK1 NK cell surface expression and induces NK cell-mediated cytotoxicity. Isoform 2 (via transmembrane domain) interacts with TYROBP (via transmembrane domain); the interaction is required for KLRK1 NK cell surface expression and induce NK cell-mediated cytotoxicity and cytokine secretion. Isoform 1 does not interact with TYROBP. Interacts with CEACAM1; recruits PTPN6 that dephosphorylates VAV1. Expressed in natural killer (NK) cells, activated CD8(+) alpha-beta and gamma-delta T-cells and natural killer T (NKT) cells (at protein level). May be expressed on dendritic cell (DC). Isoform 1 is strongly expressed in natural killer (NK) cells. Isoform 2 is weakly expressed in natural killer (NK) cells. Isoform 1 and isoform 2 are expressed in stimulated, but not in unstimulated, CD8(+) T-cells and macrophages.

It is found in the cell membrane. Functions as an activating and costimulatory receptor involved in immunosurveillance upon binding to various cellular stress-inducible ligands displayed at the surface of autologous tumor cells and virus-infected cells. Provides both stimulatory and costimulatory innate immune responses on activated killer (NK) cells, leading to cytotoxic activity. Acts as a costimulatory receptor for T-cell receptor (TCR) in CD8(+) T-cell-mediated adaptive immune responses by amplifying T-cell activation. Stimulates perforin-mediated elimination of ligand-expressing tumor cells. Signaling involves calcium influx, culminating in the expression of TNF-alpha. Participates in NK cell-mediated bone marrow graft rejection. May play a regulatory role in differentiation and survival of NK cells. Binds to ligands belonging to various subfamilies of MHC class I-related glycoproteins including RAET1A, RAET1B, RAET1C, RAET1D, RAET1E, H60 and MULT1. This chain is NKG2-D type II integral membrane protein (Klrk1), found in Mus musculus (Mouse).